The sequence spans 345 residues: 4-hydroxyproline 2-epimerase (345 aa).

Gln85 contacts substrate. Ser93 (proton acceptor) is an active-site residue. Residues Gly94–Ser95 and Asp251 contribute to the substrate site. The active-site Proton donor is Cys255. Gly256–Thr257 provides a ligand contact to substrate.

It belongs to the proline racemase family.

It catalyses the reaction trans-4-hydroxy-L-proline = cis-4-hydroxy-D-proline. Functionally, catalyzes the epimerization of trans-4-hydroxy-L-proline (t4LHyp) to cis-4-hydroxy-D-proline (c4DHyp). May be involved in a degradation pathway of t4LHyp, which would allow A.tumefaciens to grow on t4LHyp as a sole carbon source. Can also catalyze the epimerization of trans-3-hydroxy-L-proline (t3LHyp) to cis-3-hydroxy-D-proline (c3DHyp) in vitro. Displays no proline racemase activity. This chain is 4-hydroxyproline 2-epimerase, found in Agrobacterium fabrum (strain C58 / ATCC 33970) (Agrobacterium tumefaciens (strain C58)).